A 2104-amino-acid polypeptide reads, in one-letter code: Protein Ycf2 (2104 aa).

1396 to 1403 (GPVETGRS) is an ATP binding site.

The protein belongs to the Ycf2 family.

Its subcellular location is the plastid. It localises to the chloroplast stroma. Functionally, probable ATPase of unknown function. Its presence in a non-photosynthetic plant (Epifagus virginiana) and experiments in tobacco indicate that it has an essential function which is probably not related to photosynthesis. This is Protein Ycf2 (ycf2-A) from Adiantum capillus-veneris (Maidenhair fern).